Here is a 633-residue protein sequence, read N- to C-terminus: Glutamyl-tRNA(Gln) amidotransferase subunit E (633 aa).

The segment at 414 to 437 is disordered; it reads ALPDGNTEYMRPLPGKARMYPETD.

The protein belongs to the GatB/GatE family. GatE subfamily. As to quaternary structure, heterodimer of GatD and GatE.

The catalysed reaction is L-glutamyl-tRNA(Gln) + L-glutamine + ATP + H2O = L-glutaminyl-tRNA(Gln) + L-glutamate + ADP + phosphate + H(+). Functionally, allows the formation of correctly charged Gln-tRNA(Gln) through the transamidation of misacylated Glu-tRNA(Gln) in organisms which lack glutaminyl-tRNA synthetase. The reaction takes place in the presence of glutamine and ATP through an activated gamma-phospho-Glu-tRNA(Gln). The GatDE system is specific for glutamate and does not act on aspartate. This is Glutamyl-tRNA(Gln) amidotransferase subunit E from Pyrococcus abyssi (strain GE5 / Orsay).